A 224-amino-acid chain; its full sequence is DNA mismatch repair protein MutH (224 aa).

The protein belongs to the MutH family.

The protein resides in the cytoplasm. Its function is as follows. Sequence-specific endonuclease that cleaves unmethylated GATC sequences. It is involved in DNA mismatch repair. The protein is DNA mismatch repair protein MutH of Histophilus somni (strain 129Pt) (Haemophilus somnus).